Here is a 121-residue protein sequence, read N- to C-terminus: UPF0102 protein BVU_1879 (121 aa).

This sequence belongs to the UPF0102 family.

This chain is UPF0102 protein BVU_1879, found in Phocaeicola vulgatus (strain ATCC 8482 / DSM 1447 / JCM 5826 / CCUG 4940 / NBRC 14291 / NCTC 11154) (Bacteroides vulgatus).